Here is a 136-residue protein sequence, read N- to C-terminus: Holo-[acyl-carrier-protein] synthase (136 aa).

Residues Asp-8 and Glu-62 each contribute to the Mg(2+) site.

The protein belongs to the P-Pant transferase superfamily. AcpS family. It depends on Mg(2+) as a cofactor.

The protein resides in the cytoplasm. It carries out the reaction apo-[ACP] + CoA = holo-[ACP] + adenosine 3',5'-bisphosphate + H(+). In terms of biological role, transfers the 4'-phosphopantetheine moiety from coenzyme A to a Ser of acyl-carrier-protein. The sequence is that of Holo-[acyl-carrier-protein] synthase from Polynucleobacter necessarius subsp. necessarius (strain STIR1).